Here is a 422-residue protein sequence, read N- to C-terminus: Mitogen-activated protein kinase spm1 (422 aa).

A Protein kinase domain is found at 21 to 314; the sequence is FKVVKELGQG…VDDALEHPYL (294 aa). Residues 27 to 35 and lysine 52 contribute to the ATP site; that span reads LGQGAYGIV. The active-site Proton acceptor is the aspartate 149. Threonine 186 bears the Phosphothreonine mark. Positions 186-188 match the TXY motif; it reads TEY. Position 188 is a phosphotyrosine (tyrosine 188). Residues 359–422 form a disordered region; sequence RRRSHPTNPT…DHKSDDNRHN (64 aa). Residues 364-379 show a composition bias toward polar residues; that stretch reads PTNPTVNIPQPAQTVP. Residues 380–397 are compositionally biased toward low complexity; that stretch reads SNDNGSFNVSSSSSSQTS. The segment covering 411-422 has biased composition (basic and acidic residues); sequence AIDHKSDDNRHN.

Belongs to the protein kinase superfamily. CMGC Ser/Thr protein kinase family. MAP kinase subfamily. Requires Mg(2+) as cofactor. Post-translationally, dually phosphorylated on Thr-186 and Tyr-188, which activates the enzyme.

The catalysed reaction is L-seryl-[protein] + ATP = O-phospho-L-seryl-[protein] + ADP + H(+). It catalyses the reaction L-threonyl-[protein] + ATP = O-phospho-L-threonyl-[protein] + ADP + H(+). With respect to regulation, activated by tyrosine and threonine phosphorylation by skh1/pek1. Regulates cell integrity and functions coordinately with the protein kinase C pathway (pck1 and pck2). Involved the regulation of wall architecture, cell shape, cytokinesis in exponential and stationary phase, and metabolism of ions. This chain is Mitogen-activated protein kinase spm1 (spm1), found in Schizosaccharomyces pombe (strain 972 / ATCC 24843) (Fission yeast).